A 542-amino-acid polypeptide reads, in one-letter code: Nuclear hormone receptor family member nhr-35 (542 aa).

Residues 74–149 constitute a DNA-binding region (nuclear receptor); sequence NSICHICSDV…SGMRDDQVQS (76 aa). 2 NR C4-type zinc fingers span residues 77 to 97 and 113 to 137; these read CHIC…CNGC and CRFE…FMKC. Residues 186–438 enclose the NR LBD domain; the sequence is EYDQLLESLL…VLMEELILAE (253 aa). The segment at 445-487 is disordered; it reads RQDQTPCSIMNDTPSGSQDMCSPCPEDLLRTSTSSNSPTNSSL. A compositionally biased stretch (polar residues) spans 448–464; sequence QTPCSIMNDTPSGSQDM. Positions 475–487 are enriched in low complexity; sequence TSTSSNSPTNSSL.

Belongs to the nuclear hormone receptor family.

Its subcellular location is the nucleus. Its function is as follows. Orphan nuclear receptor. The sequence is that of Nuclear hormone receptor family member nhr-35 (nhr-35) from Caenorhabditis elegans.